The chain runs to 241 residues: Uridylate kinase (241 aa).

Residue 14–17 participates in ATP binding; it reads KLSG. Residues 22 to 27 are involved in allosteric activation by GTP; that stretch reads GNQGFG. Residue Gly56 participates in UMP binding. ATP-binding residues include Gly57 and Arg61. Residues Asp76 and 137-144 each bind UMP; that span reads TGNPYFTT. Residues Thr164, Tyr170, and Asp173 each contribute to the ATP site.

This sequence belongs to the UMP kinase family. Homohexamer.

Its subcellular location is the cytoplasm. It catalyses the reaction UMP + ATP = UDP + ADP. Its pathway is pyrimidine metabolism; CTP biosynthesis via de novo pathway; UDP from UMP (UMPK route): step 1/1. Allosterically activated by GTP. Inhibited by UTP. Functionally, catalyzes the reversible phosphorylation of UMP to UDP. The polypeptide is Uridylate kinase (Syntrophotalea carbinolica (strain DSM 2380 / NBRC 103641 / GraBd1) (Pelobacter carbinolicus)).